Consider the following 265-residue polypeptide: Glutamate racemase (265 aa).

Residues 12–13 and 44–45 contribute to the substrate site; these read DS and YG. The active-site Proton donor/acceptor is the Cys-75. 76–77 is a binding site for substrate; it reads NT. Cys-186 functions as the Proton donor/acceptor in the catalytic mechanism. 187-188 provides a ligand contact to substrate; the sequence is TH.

This sequence belongs to the aspartate/glutamate racemases family.

It catalyses the reaction L-glutamate = D-glutamate. The protein operates within cell wall biogenesis; peptidoglycan biosynthesis. Functionally, provides the (R)-glutamate required for cell wall biosynthesis. This Pseudomonas putida (strain ATCC 700007 / DSM 6899 / JCM 31910 / BCRC 17059 / LMG 24140 / F1) protein is Glutamate racemase.